The sequence spans 157 residues: Ubiquitin-like protein 4A (157 aa).

Residues 1-76 enclose the Ubiquitin-like domain; that stretch reads MQLTVKALQG…LNLVVKPLEK (76 aa). Lysine 48 participates in a covalent cross-link: Glycyl lysine isopeptide (Lys-Gly) (interchain with G-Cter in ubiquitin). The residue at position 90 (serine 90) is a Phosphoserine. The tract at residues 96-138 is required and sufficient for interaction with BAG6; it reads WQLISKVLARHFSIGDASRVLEQLQRDYDRSLSRLTLDDIERL.

In terms of assembly, component of the BAG6/BAT3 complex, at least composed of BAG6, UBL4A and GET4/TRC35. Interacts with BAG6; the interaction is direct and required for UBL4A protein stability. Interacts with USP13; may be indirect via BAG6. Polyubiquitinated. Ubiquitination by AMFR and deubiquitination by USP13 may regulate the interaction between the BAG6/BAT complex and SGTA and therefore may regulate client proteins fate.

Its subcellular location is the cytoplasm. The protein localises to the cytosol. The protein resides in the nucleus. As part of a cytosolic protein quality control complex, the BAG6/BAT3 complex, maintains misfolded and hydrophobic patches-containing proteins in a soluble state and participates in their proper delivery to the endoplasmic reticulum or alternatively can promote their sorting to the proteasome where they undergo degradation. The BAG6/BAT3 complex is involved in the post-translational delivery of tail-anchored/type II transmembrane proteins to the endoplasmic reticulum membrane. Recruited to ribosomes, it interacts with the transmembrane region of newly synthesized tail-anchored proteins and together with SGTA and ASNA1 mediates their delivery to the endoplasmic reticulum. Client proteins that cannot be properly delivered to the endoplasmic reticulum are ubiquitinated and sorted to the proteasome. Similarly, the BAG6/BAT3 complex also functions as a sorting platform for proteins of the secretory pathway that are mislocalized to the cytosol either delivering them to the proteasome for degradation or to the endoplasmic reticulum. The BAG6/BAT3 complex also plays a role in the endoplasmic reticulum-associated degradation (ERAD), a quality control mechanism that eliminates unwanted proteins of the endoplasmic reticulum through their retrotranslocation to the cytosol and their targeting to the proteasome. It maintains these retrotranslocated proteins in an unfolded yet soluble state condition in the cytosol to ensure their proper delivery to the proteasome. The sequence is that of Ubiquitin-like protein 4A (Ubl4a) from Rattus norvegicus (Rat).